A 365-amino-acid polypeptide reads, in one-letter code: tRNA-specific 2-thiouridylase MnmA (365 aa).

Residues 14–21 and Leu-40 contribute to the ATP site; that span reads AMSGGVDS. The active-site Nucleophile is Cys-108. Cys-108 and Cys-204 are disulfide-bonded. Gly-132 is a binding site for ATP. The interval 154–156 is interaction with tRNA; that stretch reads KDQ. Cys-204 acts as the Cysteine persulfide intermediate in catalysis.

Belongs to the MnmA/TRMU family.

Its subcellular location is the cytoplasm. It catalyses the reaction S-sulfanyl-L-cysteinyl-[protein] + uridine(34) in tRNA + AH2 + ATP = 2-thiouridine(34) in tRNA + L-cysteinyl-[protein] + A + AMP + diphosphate + H(+). In terms of biological role, catalyzes the 2-thiolation of uridine at the wobble position (U34) of tRNA, leading to the formation of s(2)U34. The protein is tRNA-specific 2-thiouridylase MnmA of Rickettsia rickettsii (strain Iowa).